We begin with the raw amino-acid sequence, 63 residues long: Small integral membrane protein 43 (63 aa).

Important for interaction with SLC2A1 and SLC2A3 stretches follow at residues 7–29 (LLLY…FVVI) and 51–57 (HREPWGF). The chain crosses the membrane as a helical span at residues 9–29 (LYLALFFFLLFLLFLLLFVVI).

Interacts with glucose transporters SLC2A1/GLUT1 and SLC2A3/GLUT3; the interactions may promote SLC2A1- and SLC2A3-mediated glucose transport to meet the energy needs of mesendoderm differentiation. As to expression, accumulates in the posterior primitive streak of mid-gastrulation embryos at 7.0 dpc. In the adult, highly abundant and enriched in the brain compared to other organs.

Its subcellular location is the cell membrane. In terms of biological role, required for mesendoderm differentiation. Interacts with glucose transporters and promotes glucose uptake. Probably augments the glucose uptake capacity of glucose transporter proteins to meet the energy needs of mesendoderm differentiation. This is Small integral membrane protein 43 from Mus musculus (Mouse).